Here is a 299-residue protein sequence, read N- to C-terminus: Taste receptor type 2 member 45 (299 aa).

Met-1 is a topological domain (extracellular). A helical transmembrane segment spans residues 2–22 (ITFLPIIFSILVVVTFVIGNF). Residues 23–55 (ANGFIALVNSTEWVKRQKISFADQIVTALAVSR) lie on the Cytoplasmic side of the membrane. The chain crosses the membrane as a helical span at residues 56-76 (VGLLWVLLLNWYSTVLNPAFC). At 77-98 (SVELRTTAYNIWAVTGHFSNWP) the chain is on the extracellular side. Residues 99 to 119 (ATSLSIFYLLKIANFSNLIFL) traverse the membrane as a helical segment. The Cytoplasmic segment spans residues 120–126 (RLKRRVK). A helical membrane pass occupies residues 127–147 (SVILVVLLGPLLFLACHLFVV). The Extracellular portion of the chain corresponds to 148 to 178 (NMNQIVWTKEYEGNMTWKIKLRRAMYLSDTT). An N-linked (GlcNAc...) asparagine glycan is attached at Asn-161. A helical membrane pass occupies residues 179–199 (VTMLANLVPFTVTLISFLLLV). Residues 200-229 (CSLCKHLKKMQLHGKGSQDPSTKVHIKVLQ) lie on the Cytoplasmic side of the membrane. Residues 230–250 (TVISFFLLRAIYFVSVIISVW) traverse the membrane as a helical segment. Residues 251–259 (SFKNLENKP) lie on the Extracellular side of the membrane. The helical transmembrane segment at 260–280 (VFMFCQAIGFSCSSAHPFILI) threads the bilayer. Topologically, residues 281–299 (WGNKKLKQTYLSVLWQMRY) are cytoplasmic.

The protein belongs to the G-protein coupled receptor T2R family. As to expression, expressed in subsets of taste receptor cells of the tongue and exclusively in gustducin-positive cells.

The protein localises to the membrane. Its function is as follows. Receptor that may play a role in the perception of bitterness and is gustducin-linked. May play a role in sensing the chemical composition of the gastrointestinal content. The activity of this receptor may stimulate alpha gustducin, mediate PLC-beta-2 activation and lead to the gating of TRPM5. This is Taste receptor type 2 member 45 (TAS2R45) from Homo sapiens (Human).